A 447-amino-acid chain; its full sequence is DNA primase DnaG (447 aa).

Residues 200–274 (DSIIVVEGRA…DIDYVARAPE (75 aa)) form the Toprim domain. Residues Glu206, Asp248, and Asp250 each coordinate Mg(2+).

It belongs to the archaeal DnaG primase family. As to quaternary structure, forms a ternary complex with MCM helicase and DNA. Component of the archaeal exosome complex. The cofactor is Mg(2+).

The catalysed reaction is ssDNA + n NTP = ssDNA/pppN(pN)n-1 hybrid + (n-1) diphosphate.. Functionally, RNA polymerase that catalyzes the synthesis of short RNA molecules used as primers for DNA polymerase during DNA replication. Also part of the exosome, which is a complex involved in RNA degradation. Acts as a poly(A)-binding protein that enhances the interaction between heteromeric, adenine-rich transcripts and the exosome. The chain is DNA primase DnaG from Pyrococcus horikoshii (strain ATCC 700860 / DSM 12428 / JCM 9974 / NBRC 100139 / OT-3).